Here is an 882-residue protein sequence, read N- to C-terminus: Translation initiation factor IF-2 (882 aa).

Composition is skewed to polar residues over residues 38–56 (NDSN…AEYS), 97–124 (GGYS…YSQN), and 140–192 (GGYS…NRDS). Disordered stretches follow at residues 38-192 (NDSN…NRDS) and 236-274 (STPA…AETE). Positions 243 to 259 (ENSKELNRKLGEKKKQQ) are enriched in basic and acidic residues. Residues 380 to 553 (EKPPVITIMG…DMMLLKANPS (174 aa)) form the tr-type G domain. The tract at residues 389-396 (GHVDHGKT) is G1. 389–396 (GHVDHGKT) is a binding site for GTP. The segment at 414–418 (GITQH) is G2. Residues 435–438 (DTPG) form a G3 region. Residues 435–439 (DTPGH) and 489–492 (NKID) contribute to the GTP site. The segment at 489 to 492 (NKID) is G4. Residues 525 to 527 (SAL) are G5.

The protein belongs to the TRAFAC class translation factor GTPase superfamily. Classic translation factor GTPase family. IF-2 subfamily.

The protein resides in the cytoplasm. One of the essential components for the initiation of protein synthesis. Protects formylmethionyl-tRNA from spontaneous hydrolysis and promotes its binding to the 30S ribosomal subunits. Also involved in the hydrolysis of GTP during the formation of the 70S ribosomal complex. The protein is Translation initiation factor IF-2 (infB) of Borreliella burgdorferi (strain ATCC 35210 / DSM 4680 / CIP 102532 / B31) (Borrelia burgdorferi).